The following is a 119-amino-acid chain: MRIKNGVWARKRHKKWLKLAKGYFGAKSKIFKQAHVAVMRSLRYAYIGRRLKKRDFRRLWITRINAAARQNGLSYSKFMNGLKKAGINLNRKVLADMAVNDQKAFAELVEIAKKQINAQ.

Belongs to the bacterial ribosomal protein bL20 family.

Functionally, binds directly to 23S ribosomal RNA and is necessary for the in vitro assembly process of the 50S ribosomal subunit. It is not involved in the protein synthesizing functions of that subunit. The chain is Large ribosomal subunit protein bL20 from Caldicellulosiruptor bescii (strain ATCC BAA-1888 / DSM 6725 / KCTC 15123 / Z-1320) (Anaerocellum thermophilum).